Consider the following 431-residue polypeptide: tRNA(Ile)-lysidine synthase (431 aa).

20 to 25 lines the ATP pocket; the sequence is SGGLDS.

Belongs to the tRNA(Ile)-lysidine synthase family.

The protein resides in the cytoplasm. It catalyses the reaction cytidine(34) in tRNA(Ile2) + L-lysine + ATP = lysidine(34) in tRNA(Ile2) + AMP + diphosphate + H(+). Ligates lysine onto the cytidine present at position 34 of the AUA codon-specific tRNA(Ile) that contains the anticodon CAU, in an ATP-dependent manner. Cytidine is converted to lysidine, thus changing the amino acid specificity of the tRNA from methionine to isoleucine. The sequence is that of tRNA(Ile)-lysidine synthase from Escherichia coli O157:H7.